The chain runs to 293 residues: MSNHDQLHRYLFANHAVRGELVSVNETYQQVLANHDYPPAVQKLLGEMLVATSLLTATLKFDGDITVQLQGGDGPLTLAVINGNNRQEMRGVARVKGEISDDSTLQEMVGNGYLVITITPAQGERYQGVVALEGETIAACLENYFMQSEQLPTRLFIRTGHVADKAAAGGMLLQVLPAQERNEDEFDHLAQLTATIKAEELFTLPANEVLYRLYHQEEVTLYEPQNVSFRCTCSRQRCADALVTLADDDVTEMLEQDGNIDMHCEYCGNHYLFDAVDIATLKNGNSASSEQIH.

2 cysteine pairs are disulfide-bonded: Cys-231–Cys-233 and Cys-264–Cys-267.

This sequence belongs to the HSP33 family. Post-translationally, under oxidizing conditions two disulfide bonds are formed involving the reactive cysteines. Under reducing conditions zinc is bound to the reactive cysteines and the protein is inactive.

It is found in the cytoplasm. Functionally, redox regulated molecular chaperone. Protects both thermally unfolding and oxidatively damaged proteins from irreversible aggregation. Plays an important role in the bacterial defense system toward oxidative stress. The sequence is that of 33 kDa chaperonin from Yersinia pseudotuberculosis serotype O:1b (strain IP 31758).